The sequence spans 146 residues: Large ribosomal subunit protein eL28 (146 aa).

The disordered stretch occupies residues 123–146 (VRAARKERSSKITFQRKAVRPKRH).

This sequence belongs to the eukaryotic ribosomal protein eL28 family.

This Trypanosoma cruzi protein is Large ribosomal subunit protein eL28.